Consider the following 83-residue polypeptide: Small ribosomal subunit protein uS17 (83 aa).

Belongs to the universal ribosomal protein uS17 family. As to quaternary structure, part of the 30S ribosomal subunit.

In terms of biological role, one of the primary rRNA binding proteins, it binds specifically to the 5'-end of 16S ribosomal RNA. The protein is Small ribosomal subunit protein uS17 of Chlamydia trachomatis serovar L2 (strain ATCC VR-902B / DSM 19102 / 434/Bu).